The chain runs to 809 residues: 3',5'-cyclic-AMP phosphodiesterase 4D (809 aa).

The disordered stretch occupies residues 1-107 (MEAEGSSAPA…SGATGRVRHR (107 aa)). A phosphoserine mark is found at H54, P59, and P63. Pro residues predominate over residues 58–89 (PPPPPPSPQPQPQCPLQPPPPPPLPPPPPPPG). The span at 90 to 102 (AARGRYASSGATG) shows a compositional bias: low complexity. Phosphoserine is present on residues S142, S299, S301, S348, and S375. The disordered stretch occupies residues 343-364 (EVEIPSPTQKEKEKKKRPMSQI). In terms of domain architecture, PDEase spans 386–715 (VKTEQEDVLA…EWYQSTIPQS (330 aa)). K387 is covalently cross-linked (Glycyl lysine isopeptide (Lys-Gly) (interchain with G-Cter in SUMO)). The Proton donor role is filled by H462. H462 lines the 3',5'-cyclic AMP pocket. An AMP-binding site is contributed by H462. Zn(2+) contacts are provided by H466, H502, D503, and D620. D503, D620, N623, Q671, and F674 together coordinate AMP. D503 is a binding site for Mg(2+). D503 lines the Mn(2+) pocket. 3',5'-cyclic AMP contacts are provided by Q671 and F674. Disordered regions lie at residues 710–729 (STIP…GRQG) and 739–809 (TLEE…SPDT). A compositionally biased stretch (polar residues) spans 762-773 (CSDSKTLCTQDS). Over residues 779–796 (PLDEQVEEEAVGEEEESQ) the composition is skewed to acidic residues.

The protein belongs to the cyclic nucleotide phosphodiesterase family. PDE4 subfamily. Homodimer for the long isoforms. Isoforms with truncated N-termini are monomeric. Isoform 3 is part of a ternary complex containing PRKAR2A, PRKAR2B and AKAP9. Interacts with PDE4DIP. Identified in a complex composed of RYR1, PDE4D, PKA, FKBP1A and protein phosphatase 1 (PP1). Isoform 5, isoform N3 and isoform 12 bind RACK1 via their unique N-terminus. Binds ARRB2. Interacts (via N-terminal region) with SHANK2 (via proline-rich region); the interaction is increased in a PKA-dependent manner. It depends on Zn(2+) as a cofactor. The cofactor is Mg(2+). Mn(2+) is required as a cofactor. In terms of processing, long isoforms that share a conserved PKA phosphorylation site in the N-terminus are activated by PKA through phosphorylation. Isoform 3 and isoform 7 are activated by phosphorylation (in vitro), but not isoform 6. Isoform N3 and isoform 12 are phosphorylated on Ser-49, Ser-51, Ser-55 and Ser-59. Sumoylation of long isoforms by PIAS4 augments their activation by PKA phosphorylation and represses their inhibition by ERK phosphorylation. Expressed in colonic epithelial cells (at protein level). Widespread; most abundant in skeletal muscle. In terms of tissue distribution, detected in brain. As to expression, detected in brain, placenta, lung and kidney. Detected in heart and skeletal muscle.

It localises to the apical cell membrane. It is found in the cytoplasm. The protein localises to the membrane. The protein resides in the cytoskeleton. Its subcellular location is the microtubule organizing center. It localises to the centrosome. It catalyses the reaction 3',5'-cyclic AMP + H2O = AMP + H(+). Its pathway is purine metabolism; 3',5'-cyclic AMP degradation; AMP from 3',5'-cyclic AMP: step 1/1. Its activity is regulated as follows. Inhibited by rolipram. Activated by phosphatidic acid. Hydrolyzes the second messenger cAMP, which is a key regulator of many important physiological processes. The protein is 3',5'-cyclic-AMP phosphodiesterase 4D of Homo sapiens (Human).